Reading from the N-terminus, the 102-residue chain is Small ribosomal subunit protein uS10 (102 aa).

It belongs to the universal ribosomal protein uS10 family. As to quaternary structure, part of the 30S ribosomal subunit.

Its function is as follows. Involved in the binding of tRNA to the ribosomes. The protein is Small ribosomal subunit protein uS10 of Streptococcus pyogenes serotype M12 (strain MGAS2096).